The chain runs to 1988 residues: Sodium channel protein type 9 subunit alpha (1988 aa).

At 1 to 125 the chain is on the cytoplasmic side; sequence MAMLPPPGPQ…RRISIKILVH (125 aa). Basic and acidic residues predominate over residues 26 to 39; that stretch reads RIAERKSKEPKEEK. Residues 26–55 are disordered; the sequence is RIAERKSKEPKEEKKDDDEEAPKPSSDLEA. The I repeat unit spans residues 112–410; the sequence is FSPLRRISIK…VAMAYEEQNQ (299 aa). The chain crosses the membrane as a helical span at residues 126–145; that stretch reads SLFSMLIMCTILTNCIFMTM. Residues 146–150 are Extracellular-facing; that stretch reads NNPPD. Residues 151–172 form a helical membrane-spanning segment; it reads WTKNVEYTFTGIYTFESLVKIL. Topologically, residues 173–185 are cytoplasmic; it reads ARGFCVGEFTFLR. Residues 186-204 form a helical membrane-spanning segment; the sequence is DPWNWLDFVVIVFAYLTEF. At 205 to 210 the chain is on the extracellular side; sequence VNLGNV. Residue asparagine 209 is glycosylated (N-linked (GlcNAc...) asparagine). Residues 211–227 form a helical membrane-spanning segment; that stretch reads SALRTFRVLRALKTISV. Over 228–241 the chain is Cytoplasmic; sequence IPGLKTIVGALIQS. Residues 242–267 traverse the membrane as a helical segment; the sequence is VKKLSDVMILTVFCLSVFALIGLQLF. Over 268–346 the chain is Extracellular; it reads MGNLKHKCFR…PDYGYTSFDT (79 aa). Cysteine 275 and cysteine 324 are oxidised to a cystine. A glycan (N-linked (GlcNAc...) asparagine) is linked at asparagine 283. An intramembrane region (pore-forming) is located at residues 347–363; that stretch reads FSWAFLALFRLMTQDYW. Residues 364–376 lie on the Extracellular side of the membrane; it reads ENLYQQTLRAAGK. A helical transmembrane segment spans residues 377–402; that stretch reads TYMIFFVVVIFLGSFYLINLILAVVA. The Cytoplasmic segment spans residues 403-745; that stretch reads MAYEEQNQAN…CIYFIVMDPF (343 aa). Over residues 461–471 the composition is skewed to low complexity; that stretch reads SSSETSKLSSK. Disordered regions lie at residues 461–543 and 565–611; these read SSSE…RGSL and GSET…SPPM. Over residues 474–486 the composition is skewed to basic residues; sequence KERRNRRKKKNQK. Basic and acidic residues-rich tracts occupy residues 489–510 and 573–585; these read SSGE…DSIR and DEHS…ESRR. Residues 726–989 form an II repeat; it reads CSPYWIKFKK…EEDPDANNLQ (264 aa). The helical transmembrane segment at 746–762 threads the bilayer; it reads VDLAITICIVLNTLFMA. At 763–771 the chain is on the extracellular side; it reads MEHHPMTEE. Residues 772–796 traverse the membrane as a helical segment; sequence FKNVLAIGNLVFTGIFAAEMVLKLI. The Cytoplasmic segment spans residues 797–805; sequence AMDPYEYFQ. A helical membrane pass occupies residues 806–822; that stretch reads VGWNIFDSLIVTLSLVE. Residues 823–831 lie on the Extracellular side of the membrane; sequence LFLADVEGL. The helical transmembrane segment at 832-848 threads the bilayer; it reads SVLRSFRLLRVFKLAKS. The Cytoplasmic segment spans residues 849–865; it reads WPTLNMLIKIIGNSVGA. The chain crosses the membrane as a helical span at residues 866-888; the sequence is LGNLTLVLAIIVFIFAVVGMQLF. The Extracellular portion of the chain corresponds to 889-915; it reads GKSYKECVCKINDDCTLPRWHMNDFFH. Cysteine 897 and cysteine 903 form a disulfide bridge. Residues 916-928 constitute an intramembrane region (pore-forming); it reads SFLIVFRVLCGEW. Residues 929–940 lie on the Extracellular side of the membrane; sequence IETMWDCMEVAG. An intrachain disulfide couples cysteine 935 to cysteine 944. Residues 941–967 traverse the membrane as a helical segment; it reads QAMCLIVYMMVMVIGNLVVLNLFLALL. Residues 968 to 1187 lie on the Cytoplasmic side of the membrane; the sequence is LSSFSSDNLT…WWNIRKTCYK (220 aa). Residues 1102–1148 form a disordered region; that stretch reads NAEELSSDSDSEYSKVRLNRSSSSECSTVDNPLPGEGEEAEAEPMNS. Over residues 1120–1131 the composition is skewed to polar residues; the sequence is NRSSSSECSTVD. The segment covering 1137–1148 has biased composition (acidic residues); sequence EGEEAEAEPMNS. The stretch at 1180–1488 is one III repeat; that stretch reads NIRKTCYKIV…KKYYNAMKKL (309 aa). A helical membrane pass occupies residues 1188-1212; that stretch reads IVEHSWFESFIVLMILLSSGALAFE. At 1213–1224 the chain is on the extracellular side; it reads DIYIERKKTIKI. Residues 1225-1250 traverse the membrane as a helical segment; that stretch reads ILEYADKIFTYIFILEMLLKWIAYGY. Topologically, residues 1251 to 1252 are cytoplasmic; sequence KT. The helical transmembrane segment at 1253-1278 threads the bilayer; sequence YFTNAWCWLDFLIVDVSLVTLVANTL. Over 1279–1287 the chain is Extracellular; that stretch reads GYSDLGPIK. A helical membrane pass occupies residues 1288-1304; the sequence is SLRTLRALRPLRALSRF. Over 1305-1317 the chain is Cytoplasmic; sequence EGMRVVVNALIGA. Residues 1318 to 1342 traverse the membrane as a helical segment; the sequence is IPSIMNVLLVCLIFWLIFSIMGVNL. Topologically, residues 1343–1394 are extracellular; the sequence is FAGKFYECINTTDGSRFPASQVPNRSECFALMNVSQNVRWKNLKVNFDNVGL. Cysteine 1350 and cysteine 1370 are oxidised to a cystine. 3 N-linked (GlcNAc...) asparagine glycosylation sites follow: asparagine 1352, asparagine 1366, and asparagine 1375. Positions 1395 to 1405 form an intramembrane region, pore-forming; the sequence is GYLSLLQVATF. The Extracellular segment spans residues 1406-1431; that stretch reads KGWTIIMYAAVDSVNVDKQPKYEYSL. A helical membrane pass occupies residues 1432 to 1457; that stretch reads YMYIYFVVFIIFGSFFTLNLFIGVII. The Cytoplasmic portion of the chain corresponds to 1458-1514; it reads DNFNQQKKKLGGQDIFMTEEQKKYYNAMKKLGSKKPQKPIPRPGNKIQGCIFDLVTN. Serine 1490 bears the Phosphoserine; by PKC mark. An IV repeat occupies 1497–1795; sequence IPRPGNKIQG…WEKFDPDATQ (299 aa). Residues 1515–1534 traverse the membrane as a helical segment; it reads QAFDISIMVLICLNMVTMMV. The Extracellular portion of the chain corresponds to 1535 to 1545; sequence EKEGQSQHMTE. The chain crosses the membrane as a helical span at residues 1546-1567; it reads VLYWINVVFIILFTGECVLKLI. At 1568 to 1576 the chain is on the cytoplasmic side; the sequence is SLRHYYFTV. Residues 1577-1598 traverse the membrane as a helical segment; sequence GWNIFDFVVVIISIVGMFLADL. The Extracellular portion of the chain corresponds to 1599–1607; it reads IETYFVSPT. The chain crosses the membrane as a helical span at residues 1608–1627; the sequence is LFRVIRLARIGRILRLVKGA. Residues 1628–1640 lie on the Cytoplasmic side of the membrane; it reads KGIRTLLFALMMS. The helical transmembrane segment at 1641–1663 threads the bilayer; the sequence is LPALFNIGLLLFLVMFIYAIFGM. The Extracellular portion of the chain corresponds to 1664 to 1686; the sequence is SNFAYVKKEDGINDMFNFETFGN. An intramembrane region (pore-forming) is located at residues 1687–1699; it reads SMICLFQITTSAG. The Extracellular portion of the chain corresponds to 1700 to 1733; the sequence is WDGLLAPILNSKPPDCDPKKVHPGSSVEGDCGNP. Cysteine 1715 and cysteine 1730 form a disulfide bridge. A helical transmembrane segment spans residues 1734–1759; it reads SVGIFYFVSYIIISFLVVVNMYIAVI. At 1760–1988 the chain is on the cytoplasmic side; that stretch reads LENFSVATEE…KGKDSKESKK (229 aa). One can recognise an IQ domain in the interval 1889-1918; that stretch reads EDVSATVIQRAYRRYRLRQNVKNISSIYIK. The segment at 1934 to 1988 is disordered; it reads FDNVNENSSPEKTDATSSTTSPPSYDSVTKPDKEKYEQDRTEKEDKGKDSKESKK. Residues 1948–1961 show a composition bias toward low complexity; it reads ATSSTTSPPSYDSV. The segment covering 1962-1988 has biased composition (basic and acidic residues); sequence TKPDKEKYEQDRTEKEDKGKDSKESKK.

It belongs to the sodium channel (TC 1.A.1.10) family. Nav1.7/SCN9A subfamily. In terms of assembly, the Nav1.7 voltage-gated sodium channel consists of an ion-conducting alpha subunit SCN9A which is functional on its own regulated by one or more beta-1 (SCN1B), beta-2 (SCN2B), beta-3 (SCN3B) and beta-4 (SCN4B) subunits. SCN1B and SCN3B are non-covalently associated with SCN9A. SCN2B and SCN4B are disulfide-linked to SCN9A. SCN1B regulates channel inactivation. Interacts with NEDD4 and NEDD4L; regulates Nav1.7 activity most probably through ubiquitination and subsequent endocytosis. Interacts with TMEM233; modulates the gating properties of NaV1.7. Post-translationally, phosphorylation at Ser-1490 by PKC in a highly conserved cytoplasmic loop increases peak sodium currents. In terms of processing, ubiquitinated by NEDD4L; which may promote its endocytosis. As to expression, expressed strongly in dorsal root ganglion, with only minor levels elsewhere in the body, smooth muscle cells, MTC cell line and C-cell carcinoma. Also expressed in vagus nerves within the head and neck region. Isoform 1 is expressed preferentially in the central and peripheral nervous system. Isoform 2 is expressed preferentially in the dorsal root ganglion.

It is found in the cell membrane. The protein resides in the cell projection. The protein localises to the neuron projection. It localises to the axon. The enzyme catalyses Na(+)(in) = Na(+)(out). Inhibited by tetrodotoxin. Weakly inhibited by saxitoxin. Inhibited by the spider huwentoxin-IV that binds the extracellular loop S3-S4 of repeat II. Inhibited by the spider protoxin-II that binds the extracellular loop S3-S4 of repeats II and IV. Inhibited by the scorpion alpha-toxins CvIV4 and AaH2. Inhibited by the conotoxin GVIIJ. Inhibited by the spider beta/delta-theraphotoxin-Pre1a. Pore-forming subunit of Nav1.7, a voltage-gated sodium (Nav) channel that directly mediates the depolarizing phase of action potentials in excitable membranes. Navs, also called VGSCs (voltage-gated sodium channels) or VDSCs (voltage-dependent sodium channels), operate by switching between closed and open conformations depending on the voltage difference across the membrane. In the open conformation they allow Na(+) ions to selectively pass through the pore, along their electrochemical gradient. The influx of Na(+) ions provokes membrane depolarization, initiating the propagation of electrical signals throughout cells and tissues. Nav1.7 plays a crucial role in controlling the excitability and action potential propagation from nociceptor neurons, thereby contributing to the sensory perception of pain. The protein is Sodium channel protein type 9 subunit alpha of Homo sapiens (Human).